The following is a 114-amino-acid chain: Protein E7 (114 aa).

The tract at residues M1–E43 is E7 terminal domain. The disordered stretch occupies residues G17–P49. Residues S31–R42 are compositionally biased toward acidic residues. A zinc finger lies at C62–C99. A Nuclear export signal motif is present at residues I80–V88.

The protein belongs to the papillomaviridae E7 protein family. In terms of assembly, homodimer. Homooligomer. Interacts with host RB1; this interaction induces dissociation of RB1-E2F1 complex thereby disrupting RB1 activity. Interacts with host EP300; this interaction represses EP300 transcriptional activity. Interacts with protein E2; this interaction inhibits E7 oncogenic activity. Interacts with host TMEM173/STING; this interaction impairs the ability of TMEM173/STING to sense cytosolic DNA and promote the production of type I interferon (IFN-alpha and IFN-beta). In terms of processing, highly phosphorylated.

It is found in the host cytoplasm. Its subcellular location is the host nucleus. In terms of biological role, plays a role in viral genome replication by driving entry of quiescent cells into the cell cycle. Stimulation of progression from G1 to S phase allows the virus to efficiently use the cellular DNA replicating machinery to achieve viral genome replication. E7 protein has both transforming and trans-activating activities. Induces the disassembly of the E2F1 transcription factor from RB1, with subsequent transcriptional activation of E2F1-regulated S-phase genes. Interferes with host histone deacetylation mediated by HDAC1 and HDAC2, leading to transcription activation. Also plays a role in the inhibition of both antiviral and antiproliferative functions of host interferon alpha. Interaction with host TMEM173/STING impairs the ability of TMEM173/STING to sense cytosolic DNA and promote the production of type I interferon (IFN-alpha and IFN-beta). The chain is Protein E7 from Human papillomavirus type 41.